Here is a 441-residue protein sequence, read N- to C-terminus: Trigger factor (441 aa).

Positions 161-246 (GDMVTVDFQG…VKDVKERILA (86 aa)) constitute a PPIase FKBP-type domain.

This sequence belongs to the FKBP-type PPIase family. Tig subfamily.

It localises to the cytoplasm. The catalysed reaction is [protein]-peptidylproline (omega=180) = [protein]-peptidylproline (omega=0). Its function is as follows. Involved in protein export. Acts as a chaperone by maintaining the newly synthesized protein in an open conformation. Functions as a peptidyl-prolyl cis-trans isomerase. This Desulfotalea psychrophila (strain LSv54 / DSM 12343) protein is Trigger factor.